Here is a 190-residue protein sequence, read N- to C-terminus: Putative serine carboxypeptidase-like 54 (190 aa).

The N-terminal stretch at 1–25 is a signal peptide; it reads MATKTFSLPFLLIVCIFSQLSSTFG. Asn58, Asn59, and Asn105 each carry an N-linked (GlcNAc...) asparagine glycan.

The protein belongs to the peptidase S10 family.

It is found in the secreted. This is Putative serine carboxypeptidase-like 54 (SCPL54) from Arabidopsis thaliana (Mouse-ear cress).